The sequence spans 1487 residues: Adhesion G protein-coupled receptor L2 (1487 aa).

Positions 1–25 (MVSSGCRMRSLWFIIIISFSPSTEG) are cleaved as a signal peptide. The Extracellular segment spans residues 26 to 855 (FSRAALPFGL…VHHLLLTVIT (830 aa)). One can recognise an SUEL-type lectin domain in the interval 41–130 (SCEGYSIDLR…KYLEVQYECV (90 aa)). N-linked (GlcNAc...) asparagine glycosylation occurs at Asn99. In terms of domain architecture, Olfactomedin-like spans 139–398 (VCPGTLKAIV…ILRYSLEFGP (260 aa)). Polar residues predominate over residues 423–439 (STTSSASQRGPVSSTAA). The interval 423–461 (STTSSASQRGPVSSTAAGPQDGSRGTKPPPAVSTTKIPP) is disordered. Residues Asn524 and Asn735 are each glycosylated (N-linked (GlcNAc...) asparagine). One can recognise a GAIN-B domain in the interval 663–841 (TRVSMPTENI…AILMAHREIA (179 aa)). 2 disulfides stabilise this stretch: Cys792–Cys823 and Cys811–Cys825. The interval 792–841 (CSFWNYSERTMMGYWSTQGCKLVDTNKTRTTCACSHLTNFAILMAHREIA) is GPS. The interval 829–841 (TNFAILMAHREIA) is stachel. A helical transmembrane segment spans residues 856–876 (WVGIVVSLVCLAICIFTFCFF). Over 877–884 (RGLQSDRN) the chain is Cytoplasmic. A helical membrane pass occupies residues 885–905 (TIHKNLCINLFIAEFIFLIGI). The Extracellular portion of the chain corresponds to 906-911 (DKTKYT). The helical transmembrane segment at 912 to 932 (IACPVFAGLLHFFFLAAFSWM) threads the bilayer. Residues 933 to 955 (CLEGVQLYLMLVEVFESEYSRKK) lie on the Cytoplasmic side of the membrane. Residues 956 to 976 (YYYVAGYLFPATVVGVSAAID) form a helical membrane-spanning segment. The Extracellular portion of the chain corresponds to 977–994 (YKSYGTVQACWLHVDNYF). A helical transmembrane segment spans residues 995-1015 (IWSFIGPVTFIILLNIIFLVI). At 1016–1064 (TLCKMVKHSNTLKPDSSRLENINNYRVCDGYYNTDLPGYEDNKPFIKSW) the chain is on the cytoplasmic side. A helical transmembrane segment spans residues 1065 to 1085 (VLGAFALLCLLGLTWSFGLLF). The Extracellular segment spans residues 1086–1090 (VNEET). Residues 1091 to 1111 (VVMAYLFTAFNAFQGLFIFIF) form a helical membrane-spanning segment. Positions 1386–1430 (EADDHLQSPNRDSLYTSMPNLRDSPYPESSPDMAEDLSPSRRSEN) are disordered. The segment covering 1392-1404 (QSPNRDSLYTSMP) has biased composition (polar residues). Phosphoserine is present on residues Ser1402, Ser1437, and Ser1458.

It belongs to the G-protein coupled receptor 2 family. Adhesion G-protein coupled receptor (ADGR) subfamily. Heterodimer of 2 chains generated by proteolytic processing; the large extracellular N-terminal fragment and the membrane-bound C-terminal fragment predominantly remain associated and non-covalently linked. Autoproteolytically processed at the GPS region of the GAIN-B domain; this cleavage modulates receptor activity. As to expression, ubiquitously expressed. In neurons, specifically localizes to dendritic domains of CA1 pyramidal neurons in the S. lacunosummoleculare.

Its subcellular location is the postsynaptic cell membrane. Forms a heterodimer of 2 chains generated by proteolytic processing that remain associated through non-covalent interactions mediated by the GAIN-B domain. In the inactivated receptor, the Stachel sequence (also named stalk) is embedded in the GAIN-B domain, where it adopts a beta-strand conformation. On activation, the Stachel moves into the 7 transmembrane region and adopts a twisted hook-shaped configuration that forms contacts within the receptor, leading to coupling of a G-alpha protein, which activates signaling. The cleaved GAIN-B and N-terminal domains can then dissociate from the rest of the receptor. In terms of biological role, orphan adhesion G-protein coupled receptor (aGPCR), which mediates synapse specificity. Ligand binding causes a conformation change that triggers signaling via guanine nucleotide-binding proteins (G proteins) and modulates the activity of downstream effectors. Following G-protein coupled receptor activation, associates with cell adhesion molecules that are expressed at the surface of adjacent cells to direct synapse specificity. Specifically mediates the establishment of perforant-path synapses on CA1-region pyramidal neurons in the hippocampus. Localizes to postsynaptic spines in excitatory synapses in the S.lacunosum-moleculare and interacts with presynaptic cell adhesion molecules, such as teneurins, promoting synapse formation. The sequence is that of Adhesion G protein-coupled receptor L2 from Mus musculus (Mouse).